The primary structure comprises 342 residues: Farnesyl pyrophosphate synthase 2 (342 aa).

3 residues coordinate isopentenyl diphosphate: Lys-47, Arg-50, and Gln-86. 2 residues coordinate Mg(2+): Asp-93 and Asp-97. Residue Arg-102 participates in dimethylallyl diphosphate binding. Isopentenyl diphosphate is bound at residue Arg-103. Lys-190, Thr-191, Gln-229, Lys-246, and Lys-255 together coordinate dimethylallyl diphosphate.

It belongs to the FPP/GGPP synthase family. Mg(2+) is required as a cofactor.

The protein localises to the cytoplasm. The catalysed reaction is isopentenyl diphosphate + dimethylallyl diphosphate = (2E)-geranyl diphosphate + diphosphate. The enzyme catalyses isopentenyl diphosphate + (2E)-geranyl diphosphate = (2E,6E)-farnesyl diphosphate + diphosphate. Its pathway is isoprenoid biosynthesis; farnesyl diphosphate biosynthesis; farnesyl diphosphate from geranyl diphosphate and isopentenyl diphosphate: step 1/1. It participates in isoprenoid biosynthesis; geranyl diphosphate biosynthesis; geranyl diphosphate from dimethylallyl diphosphate and isopentenyl diphosphate: step 1/1. Catalyzes the sequential condensation of isopentenyl pyrophosphate with the allylic pyrophosphates, dimethylallyl pyrophosphate, and then with the resultant geranylpyrophosphate to the ultimate product farnesyl pyrophosphate. This Lupinus albus (White lupine) protein is Farnesyl pyrophosphate synthase 2 (FPS2).